A 193-amino-acid polypeptide reads, in one-letter code: 3-isopropylmalate dehydratase small subunit (193 aa).

Belongs to the LeuD family. LeuD type 1 subfamily. Heterodimer of LeuC and LeuD.

The enzyme catalyses (2R,3S)-3-isopropylmalate = (2S)-2-isopropylmalate. The protein operates within amino-acid biosynthesis; L-leucine biosynthesis; L-leucine from 3-methyl-2-oxobutanoate: step 2/4. In terms of biological role, catalyzes the isomerization between 2-isopropylmalate and 3-isopropylmalate, via the formation of 2-isopropylmaleate. This Bacillus cereus (strain AH820) protein is 3-isopropylmalate dehydratase small subunit.